The chain runs to 24 residues: M-ectatotoxin-Eb2b (24 aa).

Expressed by the venom gland.

It is found in the secreted. Its function is as follows. Antimicrobial peptide active against Gram-negative bacterium E.coli MH1 (MIC=2.5 uM) and P.aeruginosa PAO1 (MIC=10 uM) and against Gram-positive bacterium A.globiformis VKM Ac-1112 (MIC=0.6 uM). The sequence is that of M-ectatotoxin-Eb2b from Ectatomma brunneum (Ant).